A 315-amino-acid chain; its full sequence is Glycerol-3-phosphate dehydrogenase [NAD(P)+] (315 aa).

NADPH-binding residues include W24, R44, R45, and K92. Sn-glycerol 3-phosphate is bound by residues K92 and G120. Residue S124 participates in NADPH binding. Sn-glycerol 3-phosphate contacts are provided by K175, D228, S238, R239, and N240. The Proton acceptor role is filled by K175. An NADPH-binding site is contributed by R239. E265 provides a ligand contact to NADPH.

This sequence belongs to the NAD-dependent glycerol-3-phosphate dehydrogenase family.

It localises to the cytoplasm. It carries out the reaction sn-glycerol 3-phosphate + NAD(+) = dihydroxyacetone phosphate + NADH + H(+). The catalysed reaction is sn-glycerol 3-phosphate + NADP(+) = dihydroxyacetone phosphate + NADPH + H(+). It functions in the pathway membrane lipid metabolism; glycerophospholipid metabolism. In terms of biological role, catalyzes the reduction of the glycolytic intermediate dihydroxyacetone phosphate (DHAP) to sn-glycerol 3-phosphate (G3P), the key precursor for phospholipid synthesis. In Synechococcus sp. (strain JA-2-3B'a(2-13)) (Cyanobacteria bacterium Yellowstone B-Prime), this protein is Glycerol-3-phosphate dehydrogenase [NAD(P)+].